A 652-amino-acid chain; its full sequence is Forkhead box protein O1 (652 aa).

Disordered stretches follow at residues 1-62 (MAEA…ASAS) and 112-154 (VHPA…SSRR). Residue threonine 24 is modified to Phosphothreonine; by PKB/AKT1 or PKB/AKT2 and SGK1. Residues 35 to 62 (SNSTTSSPAPSGGAAANPDAAASLASAS) are compositionally biased toward low complexity. Positions 114–133 (PAPPQPPPTGPLSQPPPVPP) are enriched in pro residues. A compositionally biased stretch (low complexity) spans 134-146 (SAAAAAGPLAGQP). A DNA-binding region (fork-head) is located at residues 156–232 (AWGNLSYADL…VQNEGTGKSS (77 aa)). 2 DNA-binding regions span residues 208–215 (NSIRHNLS) and 231–234 (SSWW). Position 209 is a phosphoserine; by STK4/MST1 (serine 209). 3 positions are modified to phosphoserine: serine 215, serine 231, and serine 232. Disordered regions lie at residues 231-342 (SSWW…DVHS) and 383-410 (SLTVSTQSSPGSMMQQTPCYSFAPPNTS). N6-acetyllysine is present on residues lysine 242 and lysine 245. Serine 246 carries the post-translational modification Phosphoserine; by CDK1. Omega-N-methylarginine; by PRMT1 is present on residues arginine 248 and arginine 250. Positions 248 to 250 (RRR) match the Nuclear localization signal motif. Serine 253 is subject to Phosphoserine; by PKB/AKT1 and SGK1. N6-acetyllysine occurs at positions 259, 262, and 271. The segment covering 261–272 (AKSRGRAAKKKA) has biased composition (basic residues). Positions 280–562 (GPGDSPGSQF…TPVKTPLQVP (283 aa)) are sufficient for interaction with NLK. Phosphoserine is present on residues serine 284 and serine 295. The segment covering 306-323 (NWSTFRPRTSSNASTISG) has biased composition (polar residues). A Phosphoserine; by PKB/AKT1 or PKB/AKT2 modification is found at serine 316. Phosphoserine; by CK1 and SGK1 is present on serine 319. Serine 322 is modified (phosphoserine; by CK1). Serine 326 carries the post-translational modification Phosphoserine. The residue at position 330 (threonine 330) is a Phosphothreonine. A required for interaction with RUNX2 region spans residues 360-456 (SEISNPENME…GGLNQYNCAP (97 aa)). Polar residues predominate over residues 392–401 (PGSMMQQTPC). Position 420 is an N6-acetyllysine (lysine 420). The short motif at 459–463 (LKELL) is the Required for interaction with SIRT1 element.

In terms of assembly, interacts with EP300 and CREBBP; the interactions acetylate FOXO1. Interacts with the 14-3-3 proteins, YWHAG and YWHAZ; the interactions require insulin-stimulated phosphorylation on Thr-24, promote nuclear exit and loss of transcriptional activity. Interacts with SKP2; the interaction ubiquitinates FOXO1 leading to its proteasomal degradation. Interacts with PMRT1; methylates FOXO1, prevents PKB/AKT1 phosphorylation and retains FOXO1 in the nucleus. Interacts (via an N-terminal domain) with FCOR; the interaction is direct, occurs in a forskolin-independent manner and prevents SIRT1 binding to FOXO1. Interacts (via the C-terminal half) with ATF4 (via its DNA-binding domain); the interaction occurs in osteoblasts, regulates glucose homeostasis via suppression of beta-cell proliferation and subsequent decrease in insulin production. Interacts with RUNX2; the interaction inhibits RUNX2 transcriptional activity and mediates the IGF1/insulin-dependent BGLAP expression in osteoblasts. Interacts with PPP2R1A; the interaction regulates the dephosphorylation of FOXO1 at Thr-24 and Ser-253 leading to its nuclear import. Binds to CDK1. Interacts with LRPPRC. Interacts with RUNX2; the interaction inhibits RUNX2 transcriptional activity and mediates the IGF1/insulin-dependent BGLAP expression in osteoblasts. Interacts with NLK. Interacts with SIRT1; the interaction results in the deacetylation of FOXO1 leading to activation of FOXO1-mediated transcription of genes involved in DNA repair and stress resistance. The interaction requires the presence of KRIT1 and is inhibited by FCOR. Interacts with SIRT2; the interaction is disrupted in response to oxidative stress or serum deprivation, leading to increased level of acetylated FOXO1, which promotes stress-induced autophagy by stimulating E1-like activating enzyme ATG7. Interacts (acetylated form) with ATG7; the interaction is increased in response to oxidative stress or serum deprivation and promotes the autophagic process leading to cell death. Interacts (acetylated form) with PPARG. Interacts with XBP1 isoform 2; this interaction is direct and leads to FOXO1 ubiquitination and degradation via the proteasome pathway. Interacts (via the Fork-head domain) with CEBPA; the interaction increases when FOXO1 is deacetylated. Interacts with WDFY2. Forms a complex with WDFY2 and AKT1. Interacts with CRY1. Interacts with PPIA/CYPA; the interaction promotes FOXO1 dephosphorylation, nuclear accumulation and transcriptional activity. Interacts with TOX4; FOXO1 is required for full induction of TOX4-dependent activity and the interaction is inhibited by insulin. Interacts (when phosphorylated on Ser-253) with STUB1/CHIP. Phosphorylation by NLK promotes nuclear export and inhibits the transcriptional activity. In response to growth factors, phosphorylation on Thr-24, Ser-253 and Ser-319 by PKB/AKT1 promotes nuclear export and inactivation of transactivational activity. Phosphorylation on Thr-24 is required for binding 14-3-3 proteins. Phosphorylation of Ser-253 decreases DNA-binding activity and promotes the phosphorylation of Thr-24 and Ser-316, permitting phosphorylation of Ser-319 and Ser-322, probably by CDK1, leading to nuclear exclusion and loss of function. Stress signals, such as response to oxygen or nitric oxide, attenuate the PKB/AKT1-mediated phosphorylation leading to nuclear retention. Phosphorylation of Ser-326 is independent of IGF1 and leads to reduced function. Dephosphorylated on Thr-24 and Ser-253 by PP2A in beta-cells under oxidative stress leading to nuclear retention. Phosphorylation of Ser-246 by CDK1 disrupts binding of 14-3-3 proteins leading to nuclear accumulation and has no effect on DNA-binding nor transcriptional activity. Phosphorylation by STK4/MST1 on Ser-209, upon oxidative stress, inhibits binding to 14-3-3 proteins and nuclear export. PPIA/CYPA promotes its dephosphorylation on Ser-253. In terms of processing, ubiquitinated by SKP2. Ubiquitinated, leading to proteasomal degradation. Ubiquitinated by STUB1/CHIP; when Ser-253 is phosphorylated. Post-translationally, methylation inhibits PKB/AKT1-mediated phosphorylation at Ser-253, promoting nuclear retention and increasing the transcriptional activity and cell death. Methylation increased by oxidative stress. Acetylation at Lys-259 and Lys-271 are necessary for autophagic cell death induction. Deacetylated by SIRT2 in response to oxidative stress or serum deprivation, thereby negatively regulating FOXO1-mediated autophagic cell death. Once in the nucleus, acetylated by CREBBP/EP300. Acetylation diminishes the interaction with target DNA and attenuates the transcriptional activity. It increases the phosphorylation at Ser-253, and is required for the transcriptional inhibition by FCOR. Deacetylation by SIRT1 results in reactivation of the transcriptional activity. Acetylation of FOXO1 diminishes its binding to PPARG in adipocytes. Deacetylated by SIRT2; deacetylation of FOXO1 directly increases its repressive binding to PPARG and inhibits adipocyte differentiation. Oxidative stress by hydrogen peroxide treatment appears to promote deacetylation and uncoupling of insulin-induced phosphorylation. By contrast, resveratrol acts independently of acetylation. Acetylated at Lys-420, promoting its localization to the nucleus and transcription factor activity. Deacetylation at Lys-420 by SIRT6, promotes its translocation into the cytoplasm, preventing its transcription factor activity. Deacetylation and subsequent inhibition by SIRT6 has different effects depending on cell types: it inhibits gluconeogenesis in hepatocytes, promotes glucose sensing in pancreatic beta-cells and regulates lipid catabolism in brown adipocytes. In terms of tissue distribution, expressed in liver, white and brown adipose tissues (at protein level).

It is found in the cytoplasm. It localises to the nucleus. Transcription factor that is the main target of insulin signaling and regulates metabolic homeostasis in response to oxidative stress. Binds to the insulin response element (IRE) with consensus sequence 5'-TT[G/A]TTTTG-3' and the related Daf-16 family binding element (DBE) with consensus sequence 5'-TT[G/A]TTTAC-3'. Activity suppressed by insulin. Main regulator of redox balance and osteoblast numbers and controls bone mass. Orchestrates the endocrine function of the skeleton in regulating glucose metabolism. Also acts as a key regulator of chondrogenic commitment of skeletal progenitor cells in response to lipid availability: when lipids levels are low, translocates to the nucleus and promotes expression of SOX9, which induces chondrogenic commitment and suppresses fatty acid oxidation. Acts synergistically with ATF4 to suppress osteocalcin/BGLAP activity, increasing glucose levels and triggering glucose intolerance and insulin insensitivity. Also suppresses the transcriptional activity of RUNX2, an upstream activator of osteocalcin/BGLAP. Acts as an inhibitor of glucose sensing in pancreatic beta cells by acting as a transcription repressor and suppressing expression of PDX1. In hepatocytes, promotes gluconeogenesis by acting together with PPARGC1A and CEBPA to activate the expression of genes such as IGFBP1, G6PC1 and PCK1. Also promotes gluconeogenesis by directly promoting expression of PPARGC1A and G6PC1. Important regulator of cell death acting downstream of CDK1, PKB/AKT1 and STK4/MST1. Promotes neural cell death. Mediates insulin action on adipose tissue. Regulates the expression of adipogenic genes such as PPARG during preadipocyte differentiation and, adipocyte size and adipose tissue-specific gene expression in response to excessive calorie intake. Regulates the transcriptional activity of GADD45A and repair of nitric oxide-damaged DNA in beta-cells. Required for the autophagic cell death induction in response to starvation or oxidative stress in a transcription-independent manner. Mediates the function of MLIP in cardiomyocytes hypertrophy and cardiac remodeling. Positive regulator of apoptosis in cardiac smooth muscle cells as a result of its transcriptional activation of pro-apoptotic genes. Regulates endothelial cell (EC) viability and apoptosis in a PPIA/CYPA-dependent manner via transcription of CCL2 and BCL2L11 which are involved in EC chemotaxis and apoptosis. In Mus musculus (Mouse), this protein is Forkhead box protein O1 (Foxo1).